The sequence spans 490 residues: AP-5 complex subunit mu-1 (490 aa).

An MHD domain is found at 206-476 (KAQISISITE…LISSDYYIWN (271 aa)).

The protein belongs to the adaptor complexes medium subunit family. As to quaternary structure, probably part of the adaptor protein complex 5 (AP-5) a tetramer composed of AP5B1, AP5M1, AP5S1 and AP5Z1. In terms of tissue distribution, widely expressed, including in small intestine and testis. In small intestine, highly expressed in cytoplasm of villi epithelial cells and internal glands. In testis, selectively expressed in maturing sperm cells (at protein level).

It localises to the cytoplasm. Its subcellular location is the cytosol. The protein resides in the late endosome membrane. The protein localises to the lysosome membrane. As part of AP-5, a probable fifth adaptor protein complex it may be involved in endosomal transport. This Mus musculus (Mouse) protein is AP-5 complex subunit mu-1 (Ap5m1).